The primary structure comprises 148 residues: Putative cyclin-dependent kinase inhibitor SPL2 (148 aa).

A phosphoserine mark is found at Ser59 and Ser86.

Its subcellular location is the cytoplasmic granule. It localises to the cytoplasm. Functionally, putative cyclin-dependent kinase (CDK) inhibitor necessary and sufficient for PHO pathway-dependent down-regulation of low-affinity phosphate transport. The polypeptide is Putative cyclin-dependent kinase inhibitor SPL2 (SPL2) (Saccharomyces cerevisiae (strain YJM789) (Baker's yeast)).